The following is a 415-amino-acid chain: Zona pellucida-like domain-containing protein 1 (415 aa).

The N-terminal stretch at 1–19 (MEQIWLLLLLTIRVLPGSA) is a signal peptide. Over 20-372 (QFNGYNCDAN…PPFQLNAITS (353 aa)) the chain is Extracellular. The ZP domain maps to 43 to 320 (YCGVQAITMK…PICSHRERRD (278 aa)). Cystine bridges form between C44–C155 and C79–C104. N121 and N164 each carry an N-linked (GlcNAc...) asparagine glycan. Cystine bridges form between C235-C296 and C255-C313. A disordered region spans residues 323–360 (RRTTWSPQSSSGSAVLSAGPIITRSDETPTNNSQLGSP). Composition is skewed to polar residues over residues 325-336 (TTWSPQSSSGSA) and 350-359 (TPTNNSQLGS). Residues 373–393 (ALISGMVILGVTSFSLLLCSL) form a helical membrane-spanning segment. Over 394 to 415 (ALLHRKGPTSLVLNGIRNPVFD) the chain is Cytoplasmic.

Post-translationally, proteolytically cleaved before the transmembrane segment to yield the secreted form found in the extracellular matrix of the cupula. Detected in placenta, kidney, lung, pancreas and at very low level in other tissues.

It is found in the cytoplasmic vesicle membrane. The protein localises to the secreted. The protein resides in the extracellular space. It localises to the extracellular matrix. In terms of biological role, glycoprotein which is a component of the gelatinous extracellular matrix in the cupulae of the vestibular organ. This Homo sapiens (Human) protein is Zona pellucida-like domain-containing protein 1 (ZPLD1).